The primary structure comprises 290 residues: Pyridoxal 5'-phosphate synthase subunit PdxS (290 aa).

D-ribose 5-phosphate is bound at residue D22. K79 functions as the Schiff-base intermediate with D-ribose 5-phosphate in the catalytic mechanism. G151 is a D-ribose 5-phosphate binding site. A D-glyceraldehyde 3-phosphate-binding site is contributed by R163. D-ribose 5-phosphate is bound by residues G212 and 233 to 234; that span reads GS.

It belongs to the PdxS/SNZ family. In the presence of PdxT, forms a dodecamer of heterodimers.

It catalyses the reaction aldehydo-D-ribose 5-phosphate + D-glyceraldehyde 3-phosphate + L-glutamine = pyridoxal 5'-phosphate + L-glutamate + phosphate + 3 H2O + H(+). The protein operates within cofactor biosynthesis; pyridoxal 5'-phosphate biosynthesis. Functionally, catalyzes the formation of pyridoxal 5'-phosphate from ribose 5-phosphate (RBP), glyceraldehyde 3-phosphate (G3P) and ammonia. The ammonia is provided by the PdxT subunit. Can also use ribulose 5-phosphate and dihydroxyacetone phosphate as substrates, resulting from enzyme-catalyzed isomerization of RBP and G3P, respectively. This is Pyridoxal 5'-phosphate synthase subunit PdxS from Clostridium botulinum (strain Langeland / NCTC 10281 / Type F).